A 228-amino-acid chain; its full sequence is Phosphatidylserine decarboxylase proenzyme (228 aa).

Catalysis depends on S197, which acts as the Schiff-base intermediate with substrate; via pyruvic acid. S197 is subject to Pyruvic acid (Ser); by autocatalysis.

This sequence belongs to the phosphatidylserine decarboxylase family. PSD-A subfamily. As to quaternary structure, heterodimer of a large membrane-associated beta subunit and a small pyruvoyl-containing alpha subunit. Pyruvate is required as a cofactor. Is synthesized initially as an inactive proenzyme. Formation of the active enzyme involves a self-maturation process in which the active site pyruvoyl group is generated from an internal serine residue via an autocatalytic post-translational modification. Two non-identical subunits are generated from the proenzyme in this reaction, and the pyruvate is formed at the N-terminus of the alpha chain, which is derived from the carboxyl end of the proenzyme. The post-translation cleavage follows an unusual pathway, termed non-hydrolytic serinolysis, in which the side chain hydroxyl group of the serine supplies its oxygen atom to form the C-terminus of the beta chain, while the remainder of the serine residue undergoes an oxidative deamination to produce ammonia and the pyruvoyl prosthetic group on the alpha chain.

It is found in the cell membrane. It catalyses the reaction a 1,2-diacyl-sn-glycero-3-phospho-L-serine + H(+) = a 1,2-diacyl-sn-glycero-3-phosphoethanolamine + CO2. Its pathway is phospholipid metabolism; phosphatidylethanolamine biosynthesis; phosphatidylethanolamine from CDP-diacylglycerol: step 2/2. Catalyzes the formation of phosphatidylethanolamine (PtdEtn) from phosphatidylserine (PtdSer). This Bacteroides thetaiotaomicron (strain ATCC 29148 / DSM 2079 / JCM 5827 / CCUG 10774 / NCTC 10582 / VPI-5482 / E50) protein is Phosphatidylserine decarboxylase proenzyme.